Consider the following 597-residue polypeptide: MGCLDVRFCRIIFALYSLIRKYGAWLVIPAMLGGAAFLADSVLTPAVSISSAVEGLKTLPALEHLFTENKDLTMMITAVIIVILFAVQSRGTESIGKVFGSVVMVWFAFLAIVGVVAIGNDWSVLAALNPYYGIKFLFSPNNATGLALMGTVFLSTTGAEALYSDMGHVGRGNIYFTWPFIKVALVLNYFGQGAWMLHNQNNPELADAEGINPFFQMMDPNVRYVAVVLSVTAGIIASQALITGAFTMVSEATGLNWMPHLQVCYPARTRGQLYIPVVNVVLCVATLAVLLLFRDSEHISAAYGLALTITMITTTILLGIYLWHRSNKFGAVVFTIVFLAIQVLFFAASMAKFLHGGWFTLLLTLAILMIMYTWNEGTKLERSQRRHMMPKDFLPALDKLHGDSRIHRFADNIVYLTSDPDLKRLDTDIFFSIFADHPKRARAWWAVAVETTDEPFTREYSVESFGTDYLFRVRIRLGFKVSQSIPAYLHQIMHDLEKTGELPNQQSIYPKLDADPGIGTIRYVVIHKALMPESKVSGRGALSLQIKYAIRRVAGSPVKWFGLAPYNPLVEVQPLFVSTRRPPRLTRVASQAPKREG.

A run of 10 helical transmembrane segments spans residues 23–43 (GAWL…DSVL), 72–92 (LTMM…SRGT), 98–118 (VFGS…VVAI), 143–163 (ATGL…EALY), 174–194 (IYFT…GQGA), 226–246 (AVVL…TGAF), 273–293 (LYIP…LLLF), 303–323 (YGLA…IYLW), 329–349 (FGAV…FAAS), and 353–373 (FLHG…IMYT).

Belongs to the HAK/KUP transporter (TC 2.A.72) family.

It is found in the cell membrane. The enzyme catalyses K(+)(in) + H(+)(in) = K(+)(out) + H(+)(out). Transport of potassium into the cell. Likely operates as a K(+):H(+) symporter. The protein is Probable potassium transport system protein Kup 1 (kup1) of Bifidobacterium longum (strain NCC 2705).